Here is a 415-residue protein sequence, read N- to C-terminus: Squalene synthase 10 (415 aa).

A run of 2 helical transmembrane segments spans residues 281–301 and 392–412; these read AIFR…ALCF and LIVI…SNLP.

This sequence belongs to the phytoene/squalene synthase family. Mg(2+) is required as a cofactor. The cofactor is Mn(2+).

It is found in the endoplasmic reticulum membrane. The catalysed reaction is 2 (2E,6E)-farnesyl diphosphate + NADH + H(+) = squalene + 2 diphosphate + NAD(+). It carries out the reaction 2 (2E,6E)-farnesyl diphosphate + NADPH + H(+) = squalene + 2 diphosphate + NADP(+). It functions in the pathway terpene metabolism; lanosterol biosynthesis; lanosterol from farnesyl diphosphate: step 1/3. In terms of biological role, component of the triterpene saponins (e.g. ginsenosides or panaxosides) and phytosterols biosynthetic pathways. Catalyzes the biosynthesis of squalene. This is Squalene synthase 10 from Panax ginseng (Korean ginseng).